The following is a 245-amino-acid chain: Ribonuclease 3 (245 aa).

In terms of domain architecture, RNase III spans 19–144 (ASILEERTGH…LIATIYLDGG (126 aa)). E57 contacts Mg(2+). D61 is an active-site residue. Residues D130 and E133 each coordinate Mg(2+). E133 is a catalytic residue. The DRBM domain maps to 169–238 (DAKTELQEWA…AEAMLYREGV (70 aa)).

The protein belongs to the ribonuclease III family. Homodimer. Requires Mg(2+) as cofactor.

It localises to the cytoplasm. The catalysed reaction is Endonucleolytic cleavage to 5'-phosphomonoester.. Functionally, digests double-stranded RNA. Involved in the processing of primary rRNA transcript to yield the immediate precursors to the large and small rRNAs (23S and 16S). Processes some mRNAs, and tRNAs when they are encoded in the rRNA operon. Processes pre-crRNA and tracrRNA of type II CRISPR loci if present in the organism. The polypeptide is Ribonuclease 3 (Brucella abortus (strain S19)).